The primary structure comprises 451 residues: Putative gluconeogenesis factor (451 aa).

Belongs to the gluconeogenesis factor family.

The protein resides in the cytoplasm. Required for morphogenesis under gluconeogenic growth conditions. This is Putative gluconeogenesis factor from Clostridium acetobutylicum (strain ATCC 824 / DSM 792 / JCM 1419 / IAM 19013 / LMG 5710 / NBRC 13948 / NRRL B-527 / VKM B-1787 / 2291 / W).